Reading from the N-terminus, the 142-residue chain is Hemoglobin subunit alpha-A (142 aa).

One can recognise a Globin domain in the interval 2–142 (VLSPTDKSIV…VSTVLTSKYR (141 aa)). O2 is bound at residue H59. Position 88 (H88) interacts with heme b.

Belongs to the globin family. In terms of assembly, heterotetramer of two alpha chains and two beta chains. Red blood cells.

Functionally, involved in oxygen transport from the lung to the various peripheral tissues. The sequence is that of Hemoglobin subunit alpha-A (HBAA) from Otolemur crassicaudatus (Brown greater galago).